We begin with the raw amino-acid sequence, 480 residues long: Dihydrolipoyllysine-residue acetyltransferase component 4 of pyruvate dehydrogenase complex, chloroplastic (480 aa).

Residues 1-53 constitute a chloroplast transit peptide; the sequence is MAVSSSSFLSTASLTNSKSNISFASSVSPSLRSVVFRSTTPATSHRRSMTVRS. Residues 55-133 form the Lipoyl-binding domain; it reads IREIFMPALS…AAIGLLAETE (79 aa). At Lys-96 the chain carries N6-lipoyllysine. Disordered stretches follow at residues 140–168 and 224–245; these read KSKA…SPAP and AGIA…PVTA. Over residues 142–156 the composition is skewed to low complexity; it reads KAASKSSSSVAEAVV. The region spanning 187–224 is the Peripheral subunit-binding (PSBD) domain; that stretch reads VATPYAKKLAKQHKVDIESVAGTGPFGRITASDVETAA. Positions 234–243 are enriched in pro residues; it reads APPPPPPPPV. Residue His-453 is part of the active site.

This sequence belongs to the 2-oxoacid dehydrogenase family. (R)-lipoate serves as cofactor.

The protein localises to the plastid. It localises to the chloroplast stroma. The enzyme catalyses N(6)-[(R)-dihydrolipoyl]-L-lysyl-[protein] + acetyl-CoA = N(6)-[(R)-S(8)-acetyldihydrolipoyl]-L-lysyl-[protein] + CoA. Its function is as follows. The pyruvate dehydrogenase complex catalyzes the overall conversion of pyruvate to acetyl-CoA and CO(2). It contains multiple copies of three enzymatic components: pyruvate dehydrogenase (E1), dihydrolipoamide acetyltransferase (E2) and lipoamide dehydrogenase (E3). This is Dihydrolipoyllysine-residue acetyltransferase component 4 of pyruvate dehydrogenase complex, chloroplastic (LTA2) from Arabidopsis thaliana (Mouse-ear cress).